We begin with the raw amino-acid sequence, 508 residues long: Histidine--tRNA ligase, cytoplasmic (508 aa).

In terms of domain architecture, WHEP-TRS spans 3-59 (SPALEELVLNSRHRLVRGLKQQKASADQIEEEVAKLLKLKAQLGHDESKQKFVLKTP). At Ser66 the chain carries Phosphoserine. Residues 130 to 132 (DLT), Arg157, Asp177, Arg326, and 330 to 331 (YY) each bind L-histidine.

This sequence belongs to the class-II aminoacyl-tRNA synthetase family. Homodimer.

The protein localises to the cytoplasm. It catalyses the reaction tRNA(His) + L-histidine + ATP = L-histidyl-tRNA(His) + AMP + diphosphate + H(+). Functionally, catalyzes the ATP-dependent ligation of histidine to the 3'-end of its cognate tRNA, via the formation of an aminoacyl-adenylate intermediate (His-AMP). Plays a role in axon guidance. This chain is Histidine--tRNA ligase, cytoplasmic (HARS1), found in Mesocricetus auratus (Golden hamster).